The chain runs to 491 residues: UDP-N-acetylmuramate--L-alanine ligase (491 aa).

Position 126–132 (126–132) interacts with ATP; it reads GTHGKTT.

The protein belongs to the MurCDEF family.

It is found in the cytoplasm. The enzyme catalyses UDP-N-acetyl-alpha-D-muramate + L-alanine + ATP = UDP-N-acetyl-alpha-D-muramoyl-L-alanine + ADP + phosphate + H(+). The protein operates within cell wall biogenesis; peptidoglycan biosynthesis. Functionally, cell wall formation. The protein is UDP-N-acetylmuramate--L-alanine ligase of Salmonella choleraesuis (strain SC-B67).